Consider the following 124-residue polypeptide: UPF0738 protein ABC2521 (124 aa).

Belongs to the UPF0738 family.

This chain is UPF0738 protein ABC2521, found in Shouchella clausii (strain KSM-K16) (Alkalihalobacillus clausii).